The following is a 130-amino-acid chain: Glycine cleavage system H protein (130 aa).

The Lipoyl-binding domain occupies 28-110; the sequence is TVRIGITSVA…FGEGWLFEVE (83 aa). K69 is modified (N6-lipoyllysine).

It belongs to the GcvH family. As to quaternary structure, the glycine cleavage system is composed of four proteins: P, T, L and H. The cofactor is (R)-lipoate.

Functionally, the glycine cleavage system catalyzes the degradation of glycine. The H protein shuttles the methylamine group of glycine from the P protein to the T protein. This chain is Glycine cleavage system H protein, found in Corynebacterium aurimucosum (strain ATCC 700975 / DSM 44827 / CIP 107346 / CN-1) (Corynebacterium nigricans).